The chain runs to 171 residues: Large ribosomal subunit protein bL9 (171 aa).

Belongs to the bacterial ribosomal protein bL9 family.

Binds to the 23S rRNA. The sequence is that of Large ribosomal subunit protein bL9 from Rickettsia conorii (strain ATCC VR-613 / Malish 7).